A 550-amino-acid polypeptide reads, in one-letter code: CTP synthase (550 aa).

Residues 1–265 (MTKFIFVTGG…DEIVVEQLGL (265 aa)) are amidoligase domain. Residue S13 participates in CTP binding. S13 provides a ligand contact to UTP. 14–19 (SLGKGI) contacts ATP. Y54 contacts L-glutamine. Position 71 (D71) interacts with ATP. Mg(2+) is bound by residues D71 and E139. CTP is bound by residues 146–148 (DIE), 186–191 (KTKPTQ), and K222. Residues 186–191 (KTKPTQ) and K222 contribute to the UTP site. The Glutamine amidotransferase type-1 domain occupies 290-541 (TITLVGKYVD…IRAAAEHRRR (252 aa)). G351 serves as a coordination point for L-glutamine. C378 (nucleophile; for glutamine hydrolysis) is an active-site residue. Residues 379 to 382 (LGMQ), E402, and R469 each bind L-glutamine. Residues H514 and E516 contribute to the active site.

Belongs to the CTP synthase family. Homotetramer.

It catalyses the reaction UTP + L-glutamine + ATP + H2O = CTP + L-glutamate + ADP + phosphate + 2 H(+). It carries out the reaction L-glutamine + H2O = L-glutamate + NH4(+). The catalysed reaction is UTP + NH4(+) + ATP = CTP + ADP + phosphate + 2 H(+). It functions in the pathway pyrimidine metabolism; CTP biosynthesis via de novo pathway; CTP from UDP: step 2/2. Its activity is regulated as follows. Allosterically activated by GTP, when glutamine is the substrate; GTP has no effect on the reaction when ammonia is the substrate. The allosteric effector GTP functions by stabilizing the protein conformation that binds the tetrahedral intermediate(s) formed during glutamine hydrolysis. Inhibited by the product CTP, via allosteric rather than competitive inhibition. Its function is as follows. Catalyzes the ATP-dependent amination of UTP to CTP with either L-glutamine or ammonia as the source of nitrogen. Regulates intracellular CTP levels through interactions with the four ribonucleotide triphosphates. The sequence is that of CTP synthase from Nitrosococcus oceani (strain ATCC 19707 / BCRC 17464 / JCM 30415 / NCIMB 11848 / C-107).